The following is a 366-amino-acid chain: uncharacterized protein (366 aa).

The tract at residues Gln199 to Asp267 is disordered.

This is an uncharacterized protein from Haemophilus influenzae (strain ATCC 51907 / DSM 11121 / KW20 / Rd).